Consider the following 485-residue polypeptide: 3-isopropylmalate dehydratase large subunit (485 aa).

[4Fe-4S] cluster is bound by residues C367, C427, and C430. Polar residues predominate over residues 439-451; that stretch reads SPGQRAASTSNRN. The interval 439–462 is disordered; that stretch reads SPGQRAASTSNRNFEGRQGKGGRT.

It belongs to the aconitase/IPM isomerase family. LeuC type 1 subfamily. As to quaternary structure, heterodimer of LeuC and LeuD. Requires [4Fe-4S] cluster as cofactor.

It catalyses the reaction (2R,3S)-3-isopropylmalate = (2S)-2-isopropylmalate. Its pathway is amino-acid biosynthesis; L-leucine biosynthesis; L-leucine from 3-methyl-2-oxobutanoate: step 2/4. In terms of biological role, catalyzes the isomerization between 2-isopropylmalate and 3-isopropylmalate, via the formation of 2-isopropylmaleate. This chain is 3-isopropylmalate dehydratase large subunit, found in Actinoplanes teichomyceticus.